An 83-amino-acid polypeptide reads, in one-letter code: Cell division topological specificity factor (83 aa).

This sequence belongs to the MinE family.

Its function is as follows. Prevents the cell division inhibition by proteins MinC and MinD at internal division sites while permitting inhibition at polar sites. This ensures cell division at the proper site by restricting the formation of a division septum at the midpoint of the long axis of the cell. The chain is Cell division topological specificity factor from Buchnera aphidicola subsp. Schizaphis graminum (strain Sg).